Consider the following 187-residue polypeptide: uncharacterized protein (187 aa).

This sequence belongs to the isochorismatase family.

This is an uncharacterized protein from Bacillus subtilis (strain 168).